The primary structure comprises 250 residues: UDP-2,3-diacylglucosamine hydrolase (250 aa).

Mn(2+)-binding residues include aspartate 7, histidine 9, aspartate 40, asparagine 78, and histidine 113. 78 to 79 (NR) is a substrate binding site. Residues aspartate 121, serine 159, threonine 163, lysine 166, and histidine 194 each contribute to the substrate site. Mn(2+) is bound by residues histidine 194 and histidine 196.

The protein belongs to the LpxH family. It depends on Mn(2+) as a cofactor.

It is found in the cell inner membrane. It catalyses the reaction UDP-2-N,3-O-bis[(3R)-3-hydroxytetradecanoyl]-alpha-D-glucosamine + H2O = 2-N,3-O-bis[(3R)-3-hydroxytetradecanoyl]-alpha-D-glucosaminyl 1-phosphate + UMP + 2 H(+). Its pathway is glycolipid biosynthesis; lipid IV(A) biosynthesis; lipid IV(A) from (3R)-3-hydroxytetradecanoyl-[acyl-carrier-protein] and UDP-N-acetyl-alpha-D-glucosamine: step 4/6. In terms of biological role, hydrolyzes the pyrophosphate bond of UDP-2,3-diacylglucosamine to yield 2,3-diacylglucosamine 1-phosphate (lipid X) and UMP by catalyzing the attack of water at the alpha-P atom. Involved in the biosynthesis of lipid A, a phosphorylated glycolipid that anchors the lipopolysaccharide to the outer membrane of the cell. In Pseudomonas fluorescens (strain ATCC BAA-477 / NRRL B-23932 / Pf-5), this protein is UDP-2,3-diacylglucosamine hydrolase.